Consider the following 188-residue polypeptide: PRA1 family protein F3 (188 aa).

A run of 4 helical transmembrane segments spans residues 74–94, 95–115, 123–143, and 145–165; these read IVVL…LIVF, TVLV…IKLF, TVLI…NATF, and IVGA…VRKT.

The protein belongs to the PRA1 family. Interacts with PRA1F2 and PRA1D. Interacts with ACD11 and BPA1. Expressed in lateral roots, lateral root caps and columella cells.

It is found in the endoplasmic reticulum membrane. It localises to the membrane. The protein resides in the cytoplasm. In terms of biological role, may be involved in both secretory and endocytic intracellular trafficking in the endosomal/prevacuolar compartments. This Arabidopsis thaliana (Mouse-ear cress) protein is PRA1 family protein F3.